A 323-amino-acid polypeptide reads, in one-letter code: 3-dehydroquinate synthase (323 aa).

Belongs to the archaeal-type DHQ synthase family.

It catalyses the reaction 2-amino-2,3,7-trideoxy-D-lyxo-hept-6-ulosonate + NAD(+) + H2O = 3-dehydroquinate + NH4(+) + NADH + H(+). Catalyzes the oxidative deamination and cyclization of 2-amino-3,7-dideoxy-D-threo-hept-6-ulosonic acid (ADH) to yield 3-dehydroquinate (DHQ), which is fed into the canonical shikimic pathway of aromatic amino acid biosynthesis. The chain is 3-dehydroquinate synthase from Archaeoglobus fulgidus (strain ATCC 49558 / DSM 4304 / JCM 9628 / NBRC 100126 / VC-16).